We begin with the raw amino-acid sequence, 547 residues long: Chaperonin GroEL 1 (547 aa).

ATP-binding positions include 30 to 33, lysine 51, 87 to 91, glycine 415, 479 to 481, and aspartate 495; these read TLGP, DGTTT, and NAA.

Belongs to the chaperonin (HSP60) family. Forms a cylinder of 14 subunits composed of two heptameric rings stacked back-to-back. Interacts with the co-chaperonin GroES.

It is found in the cytoplasm. The catalysed reaction is ATP + H2O + a folded polypeptide = ADP + phosphate + an unfolded polypeptide.. Functionally, together with its co-chaperonin GroES, plays an essential role in assisting protein folding. The GroEL-GroES system forms a nano-cage that allows encapsulation of the non-native substrate proteins and provides a physical environment optimized to promote and accelerate protein folding. The chain is Chaperonin GroEL 1 from Vibrio parahaemolyticus serotype O3:K6 (strain RIMD 2210633).